Reading from the N-terminus, the 888-residue chain is Autotaxin (888 aa).

The signal sequence occupies residues Met-1 to Gly-27. The propeptide at Val-28–Arg-35 is removed by furin. Asn-54 carries N-linked (GlcNAc...) asparagine glycosylation. SMB domains lie at Ile-55–Ala-98 and Gly-99–His-143. 10 disulfides stabilise this stretch: Cys-59–Cys-76, Cys-63–Cys-94, Cys-74–Cys-87, Cys-80–Cys-86, Cys-103–Cys-120, Cys-108–Cys-138, Cys-118–Cys-131, Cys-124–Cys-130, Cys-149–Cys-195, and Cys-157–Cys-351. Residues Arg-127–Asp-129 carry the Cell attachment site motif. Positions Val-145 to Pro-502 are phosphodiesterase. The Zn(2+) site is built by Asp-172 and Thr-210. Residue Thr-210 is the Nucleophile of the active site. Residues Thr-210, Asn-231, and Asp-312 each contribute to the 1-(9Z-octadecenoyl)-sn-glycero-3-phosphate site. 3 residues coordinate 1-hexadecanoyl-sn-glycero-3-phosphate: Thr-210, Asn-231, and Asp-312. The 1-tetradecanoyl-sn-glycerol 3-phosphate site is built by Thr-210, Asn-231, and Asp-312. Zn(2+) is bound by residues Asp-312, His-316, Asp-359, and His-360. Disulfide bonds link Cys-367/Cys-469, Cys-414/Cys-831, Cys-567/Cys-692, Cys-569/Cys-677, and Cys-800/Cys-810. The N-linked (GlcNAc...) asparagine glycan is linked to Asn-411. Residue His-475 coordinates Zn(2+). Position 475 (His-475) interacts with 1-(9Z-octadecenoyl)-sn-glycero-3-phosphate. A 1-hexadecanoyl-sn-glycero-3-phosphate-binding site is contributed by His-475. His-475 serves as a coordination point for 1-tetradecanoyl-sn-glycerol 3-phosphate. An N-linked (GlcNAc...) asparagine glycan is attached at Asn-525. The segment at Leu-623–Ile-888 is nuclease-like domain. Ca(2+)-binding residues include Asp-765, Asp-767, Asp-769, Leu-771, and Asp-773. A glycan (N-linked (GlcNAc...) asparagine) is linked at Asn-832. The tract at residues Ile-855–Thr-876 is required for secretion.

Belongs to the nucleotide pyrophosphatase/phosphodiesterase family. The cofactor is Zn(2+). Requires Ca(2+) as cofactor. In terms of processing, N-glycosylation, but not furin-cleavage, plays a critical role on secretion and on lysoPLD activity. Post-translationally, the interdomain disulfide bond between Cys-414 and Cys-831 is essential for catalytic activity. As to expression, detected in fetal serum (at protein level).

It is found in the secreted. It catalyses the reaction a 1-O-alkyl-sn-glycero-3-phosphoethanolamine + H2O = a 1-O-alkyl-sn-glycero-3-phosphate + ethanolamine + H(+). The enzyme catalyses a 1-acyl-sn-glycero-3-phosphoethanolamine + H2O = a 1-acyl-sn-glycero-3-phosphate + ethanolamine + H(+). The catalysed reaction is 1-(9Z-octadecenoyl)-sn-glycero-3-phosphoethanolamine + H2O = 1-(9Z-octadecenoyl)-sn-glycero-3-phosphate + ethanolamine + H(+). It carries out the reaction a 1-O-alkyl-sn-glycero-3-phosphocholine + H2O = a 1-O-alkyl-sn-glycero-3-phosphate + choline + H(+). It catalyses the reaction 1-O-(9Z-octadecenyl)-sn-glycero-3-phosphocholine + H2O = 1-O-(9Z-octadecenyl)-sn-glycero-3-phosphate + choline + H(+). The enzyme catalyses 1-O-hexadecyl-sn-glycero-3-phosphocholine + H2O = 1-O-hexadecyl-sn-glycero-3-phosphate + choline + H(+). The catalysed reaction is a 1-O-(1Z-alkenyl)-sn-glycero-3-phosphocholine + H2O = a 1-O-(1Z-alkenyl)-sn-glycero-3-phosphate + choline + H(+). It carries out the reaction a 1-acyl-sn-glycero-3-phosphocholine + H2O = a 1-acyl-sn-glycero-3-phosphate + choline + H(+). It catalyses the reaction 1-dodecanoyl-sn-glycero-3-phosphocholine + H2O = 1-dodecanoyl-sn-glycerol 3-phosphate + choline + H(+). The enzyme catalyses 1-(9Z-octadecenoyl)-sn-glycero-3-phosphocholine + H2O = 1-(9Z-octadecenoyl)-sn-glycero-3-phosphate + choline + H(+). The catalysed reaction is 1-tetradecanoyl-sn-glycero-3-phosphocholine + H2O = 1-tetradecanoyl-sn-glycerol 3-phosphate + choline + H(+). It carries out the reaction 1-decanoyl-sn-glycero-3-phosphocholine + H2O = 1-decanoyl-sn-glycero-3-phosphate + choline + H(+). It catalyses the reaction 1-octadecanoyl-sn-glycero-3-phosphocholine + H2O = 1-octadecanoyl-sn-glycero-3-phosphate + choline + H(+). The enzyme catalyses 1-hexadecanoyl-sn-glycero-3-phosphocholine + H2O = 1-hexadecanoyl-sn-glycero-3-phosphate + choline + H(+). The catalysed reaction is 1-hexanoyl-sn-glycero-3-phosphocholine + H2O = 1-hexanoyl-sn-glycero-3-phosphate + choline + H(+). It carries out the reaction 1-(9Z,12Z)-octadecadienoyl-sn-glycero-3-phosphocholine + H2O = 1-(9Z,12Z)-octadecadienoyl-sn-glycero-3-phosphate + choline + H(+). It catalyses the reaction sphing-4-enine-phosphocholine + H2O = sphing-4-enine 1-phosphate + choline + H(+). The enzyme catalyses 1-(5Z,8Z,11Z,14Z-eicosatetraenoyl)-sn-glycero-3-phosphocholine + H2O = 1-(5Z,8Z,11Z,14Z-eicosatetraenoyl)-sn-glycero-3-phosphate + choline + H(+). The catalysed reaction is a 2-acyl-sn-glycero-3-phosphocholine + H2O = a 2-acyl-sn-glycerol 3-phosphate + choline + H(+). It carries out the reaction a 1,2-diacyl-sn-glycero-3-phosphocholine + H2O = a 1,2-diacyl-sn-glycero-3-phosphate + choline + H(+). It catalyses the reaction 1,2-dioctanoyl-sn-glycero-3-phosphocholine + H2O = 1,2-dioctanoyl-sn-glycero-3-phosphate + choline + H(+). The enzyme catalyses 1,2-didecanoyl-sn-glycero-3-phosphocholine + H2O = 1,2-didecanoyl-sn-glycero-3-phosphate + choline + H(+). The catalysed reaction is a 1-acyl-sn-glycero-3-phospho-L-serine + H2O = a 1-acyl-sn-glycero-3-phosphate + L-serine + H(+). It carries out the reaction 1-(9Z-octadecenoyl)-sn-glycero-3-phospho-L-serine + H2O = 1-(9Z-octadecenoyl)-sn-glycero-3-phosphate + L-serine + H(+). It catalyses the reaction a 2-acyl-sn-glycero-3-phospho-L-serine + H2O = a 2-acyl-sn-glycerol 3-phosphate + L-serine + H(+). Secreted lysophospholipase D that hydrolyzes lysophospholipids to produce the signaling molecule lysophosphatidic acid (LPA) in extracellular fluids. Its major substrate is lysophosphatidylcholine. Can also act on sphingosylphosphorylcholine producing sphingosine-1-phosphate, a modulator of cell motility. Can hydrolyze, in vitro, bis-pNPP, to some extent pNP-TMP, and barely ATP. Involved in several motility-related processes such as angiogenesis and neurite outgrowth. Acts as an angiogenic factor by stimulating migration of smooth muscle cells and microtubule formation. Stimulates migration of melanoma cells, probably via a pertussis toxin-sensitive G protein. May have a role in induction of parturition. Possible involvement in cell proliferation and adipose tissue development. Required for LPA production in activated platelets, cleaves the sn-1 lysophospholipids to generate sn-1 lysophosphatidic acids containing predominantly 18:2 and 20:4 fatty acids. Shows a preference for the sn-1 to the sn-2 isomer of 1-O-alkyl-sn-glycero-3-phosphocholine (lyso-PAF). The chain is Autotaxin from Bos taurus (Bovine).